The sequence spans 453 residues: HTH-type pyridoxine biosynthesis transcriptional regulator PdxR (453 aa).

An HTH gntR-type domain is found at 15–83; it reads TSIPTQLTEQ…RGSGTTINPD (69 aa). The segment at residues 43-62 is a DNA-binding region (H-T-H motif); it reads SRSLSTQLGVSRGSVVTAYD.

This sequence in the C-terminal section; belongs to the class-I pyridoxal-phosphate-dependent aminotransferase family. Pyridoxal 5'-phosphate is required as a cofactor.

May have a regulatory function in pyridoxine biosynthesis. Is said to also have an aminotransferase activity in valine biosynthesis as a double inactivation of ilvE and pdxR results in an auxotrophic requirement for valine. The sequence is that of HTH-type pyridoxine biosynthesis transcriptional regulator PdxR (pdxR) from Corynebacterium glutamicum (strain ATCC 13032 / DSM 20300 / JCM 1318 / BCRC 11384 / CCUG 27702 / LMG 3730 / NBRC 12168 / NCIMB 10025 / NRRL B-2784 / 534).